The sequence spans 107 residues: Nucleoid-associated protein RP866 (107 aa).

The protein belongs to the YbaB/EbfC family. Homodimer.

It is found in the cytoplasm. The protein resides in the nucleoid. In terms of biological role, binds to DNA and alters its conformation. May be involved in regulation of gene expression, nucleoid organization and DNA protection. This is Nucleoid-associated protein RP866 from Rickettsia prowazekii (strain Madrid E).